Reading from the N-terminus, the 293-residue chain is Protein orai (293 aa).

Residues 1 to 122 (MPRSHDPSRV…RAQLKASSRT (122 aa)) lie on the Cytoplasmic side of the membrane. Positions 62–81 (STAGGGSRNGVGSKEGSVTS) are disordered. A helical transmembrane segment spans residues 123–141 (SALLAGFAMVCLVELQYDQ). Topologically, residues 142–146 (STPKP) are extracellular. The helical transmembrane segment at 147–167 (LLIVLGVVTSLLVSVHLLALM) threads the bilayer. The Cytoplasmic portion of the chain corresponds to 168-198 (MSTCILPYMEATGCTQDSPHIKLKFYIDLSW). A helical membrane pass occupies residues 199–219 (LFSTCIGLLLFLVEIGVIFYV). The Extracellular segment spans residues 220–230 (KFTAVGYPTAG). The chain crosses the membrane as a helical span at residues 231–251 (YITTAMLVPVGVVFVVFSYLI). The Cytoplasmic segment spans residues 252-293 (HKNRVSHSLGRFKHKVDTMKQFLDVEANLQKSTLAPSTIRDI).

The protein belongs to the Orai family. Expressed in gonad sheath cells, hypodermis, intestine and spermatheca. Coexpressed with stim-1.

The protein resides in the membrane. Its function is as follows. Ca(2+) release-activated Ca(2+)-like (CRAC-like) channel subunit which mediates Ca(2+) influx and increase in Ca(2+)-selective current by synergy with the Ca(2+) sensor, stim-1. Required for Ca(2+) and IP3-dependent contractile activity of sheath cells and the spermatheca. Affects brood size and somatic cell function. The polypeptide is Protein orai (orai-1) (Caenorhabditis elegans).